The primary structure comprises 254 residues: DNA repair protein RecO (254 aa).

The protein belongs to the RecO family.

Involved in DNA repair and RecF pathway recombination. The chain is DNA repair protein RecO from Gluconacetobacter diazotrophicus (strain ATCC 49037 / DSM 5601 / CCUG 37298 / CIP 103539 / LMG 7603 / PAl5).